Here is a 348-residue protein sequence, read N- to C-terminus: Glucan endo-1,3-beta-glucosidase, basic isoform (348 aa).

At Gln-1 the chain carries Pyrrolidone carboxylic acid. The Proton donor role is filled by Glu-95. The active-site Nucleophile is the Glu-240. Positions 317 to 348 (AQRMQRLLLMSSMQHIPLRVTCKLEPSSQSLL) are cleaved as a propeptide — removed in mature form.

Belongs to the glycosyl hydrolase 17 family.

The protein resides in the vacuole. The enzyme catalyses Hydrolysis of (1-&gt;3)-beta-D-glucosidic linkages in (1-&gt;3)-beta-D-glucans.. In terms of biological role, implicated in the defense of plants against pathogens. The chain is Glucan endo-1,3-beta-glucosidase, basic isoform from Phaseolus vulgaris (Kidney bean).